The primary structure comprises 106 residues: Nucleoid-associated protein Noc_2594 (106 aa).

2 disordered regions span residues 1 to 20 and 85 to 106; these read MKGGLGNLMKQAQQLQSNME and QSKEKMSSMTSGMLPPGFKLPL. A compositionally biased stretch (polar residues) spans 10-20; that stretch reads KQAQQLQSNME.

This sequence belongs to the YbaB/EbfC family. Homodimer.

The protein resides in the cytoplasm. It localises to the nucleoid. Its function is as follows. Binds to DNA and alters its conformation. May be involved in regulation of gene expression, nucleoid organization and DNA protection. This is Nucleoid-associated protein Noc_2594 from Nitrosococcus oceani (strain ATCC 19707 / BCRC 17464 / JCM 30415 / NCIMB 11848 / C-107).